We begin with the raw amino-acid sequence, 82 residues long: Small ribosomal subunit protein bS16 (82 aa).

The protein belongs to the bacterial ribosomal protein bS16 family.

The sequence is that of Small ribosomal subunit protein bS16 from Deinococcus geothermalis (strain DSM 11300 / CIP 105573 / AG-3a).